The primary structure comprises 185 residues: Thiol:disulfide interchange protein DsbE (185 aa).

The Cytoplasmic portion of the chain corresponds to Met-1–Asn-4. The chain crosses the membrane as a helical span at residues Val-5 to Ala-25. The Periplasmic segment spans residues Arg-26–Gln-185. In terms of domain architecture, Thioredoxin spans Ala-39 to Asp-177. A disulfide bridge connects residues Cys-80 and Cys-83.

Belongs to the thioredoxin family. DsbE subfamily.

Its subcellular location is the cell inner membrane. Involved in disulfide bond formation. Catalyzes a late, reductive step in the assembly of periplasmic c-type cytochromes, probably the reduction of disulfide bonds of the apocytochrome c to allow covalent linkage with the heme. Possible subunit of a heme lyase. This is Thiol:disulfide interchange protein DsbE (dsbE1) from Salmonella typhimurium (strain LT2 / SGSC1412 / ATCC 700720).